A 153-amino-acid polypeptide reads, in one-letter code: NADPH-dependent 7-cyano-7-deazaguanine reductase (153 aa).

The segment covering 1–17 (MTDTRNLTQLGSKTQAP) has biased composition (polar residues). Residues 1–23 (MTDTRNLTQLGSKTQAPASPEAA) are disordered. C51 functions as the Thioimide intermediate in the catalytic mechanism. Residue D58 is the Proton donor of the active site. Substrate-binding positions include 73–75 (VES) and 92–93 (HE).

Belongs to the GTP cyclohydrolase I family. QueF type 1 subfamily.

The protein localises to the cytoplasm. The catalysed reaction is 7-aminomethyl-7-carbaguanine + 2 NADP(+) = 7-cyano-7-deazaguanine + 2 NADPH + 3 H(+). The protein operates within tRNA modification; tRNA-queuosine biosynthesis. Catalyzes the NADPH-dependent reduction of 7-cyano-7-deazaguanine (preQ0) to 7-aminomethyl-7-deazaguanine (preQ1). The chain is NADPH-dependent 7-cyano-7-deazaguanine reductase from Chelativorans sp. (strain BNC1).